The chain runs to 246 residues: Proteasome subunit alpha type-5 (246 aa).

It belongs to the peptidase T1A family. In terms of assembly, the 26S proteasome consists of a 20S proteasome core and two 19S regulatory subunits. The 20S proteasome core is composed of 28 subunits that are arranged in four stacked rings, resulting in a barrel-shaped structure. The two end rings are each formed by seven alpha subunits, and the two central rings are each formed by seven beta subunits. The catalytic chamber with the active sites is on the inside of the barrel.

It localises to the cytoplasm. Its subcellular location is the nucleus. The proteasome is a multicatalytic proteinase complex which is characterized by its ability to cleave peptides with Arg, Phe, Tyr, Leu, and Glu adjacent to the leaving group at neutral or slightly basic pH. The proteasome has an ATP-dependent proteolytic activity. The sequence is that of Proteasome subunit alpha type-5 from Trypanosoma brucei brucei.